The sequence spans 398 residues: 1-deoxy-D-xylulose 5-phosphate reductoisomerase (398 aa).

Positions 10, 11, 12, 13, 36, 37, 38, and 124 each coordinate NADPH. Position 125 (Lys125) interacts with 1-deoxy-D-xylulose 5-phosphate. An NADPH-binding site is contributed by Glu126. Residue Asp150 coordinates Mn(2+). Positions 151, 152, 186, and 209 each coordinate 1-deoxy-D-xylulose 5-phosphate. Glu152 serves as a coordination point for Mn(2+). An NADPH-binding site is contributed by Gly215. The 1-deoxy-D-xylulose 5-phosphate site is built by Ser222, Asn227, Lys228, and Glu231. Glu231 provides a ligand contact to Mn(2+).

It belongs to the DXR family. In terms of assembly, homodimer. Mg(2+) serves as cofactor. Requires Mn(2+) as cofactor.

It catalyses the reaction 2-C-methyl-D-erythritol 4-phosphate + NADP(+) = 1-deoxy-D-xylulose 5-phosphate + NADPH + H(+). It functions in the pathway isoprenoid biosynthesis; isopentenyl diphosphate biosynthesis via DXP pathway; isopentenyl diphosphate from 1-deoxy-D-xylulose 5-phosphate: step 1/6. Functionally, catalyzes the NADPH-dependent rearrangement and reduction of 1-deoxy-D-xylulose-5-phosphate (DXP) to 2-C-methyl-D-erythritol 4-phosphate (MEP). The sequence is that of 1-deoxy-D-xylulose 5-phosphate reductoisomerase from Yersinia enterocolitica serotype O:8 / biotype 1B (strain NCTC 13174 / 8081).